The chain runs to 86 residues: Beta-toxin CsEI (86 aa).

Positions 1 to 19 are cleaved as a signal peptide; that stretch reads MNSLLMITACLVLIGTVWA. Residues 20–84 enclose the LCN-type CS-alpha/beta domain; the sequence is KDGYLVEKTG…TWPLPNKTCG (65 aa). Disulfide bonds link Cys-30/Cys-83, Cys-34/Cys-59, Cys-43/Cys-64, and Cys-47/Cys-66. Cys-83 bears the Cysteine amide mark.

Belongs to the long (4 C-C) scorpion toxin superfamily. Sodium channel inhibitor family. Beta subfamily. Expressed by the venom gland.

Its subcellular location is the secreted. In terms of biological role, beta toxins bind voltage-independently at site-4 of sodium channels (Nav) and shift the voltage of activation toward more negative potentials thereby affecting sodium channel activation and promoting spontaneous and repetitive firing. Affects channels from chicken and frog. The chain is Beta-toxin CsEI from Centruroides sculpturatus (Arizona bark scorpion).